The chain runs to 126 residues: Large ribosomal subunit protein bL19 (126 aa).

The protein belongs to the bacterial ribosomal protein bL19 family.

This protein is located at the 30S-50S ribosomal subunit interface and may play a role in the structure and function of the aminoacyl-tRNA binding site. In Bordetella petrii (strain ATCC BAA-461 / DSM 12804 / CCUG 43448), this protein is Large ribosomal subunit protein bL19.